Reading from the N-terminus, the 197-residue chain is Ribonuclease HII (197 aa).

The region spanning 11–197 (NLIAGVDEVG…FAPVRKILGL (187 aa)) is the RNase H type-2 domain. Positions 17, 18, and 109 each coordinate a divalent metal cation.

Belongs to the RNase HII family. The cofactor is Mn(2+). Mg(2+) is required as a cofactor.

It is found in the cytoplasm. It catalyses the reaction Endonucleolytic cleavage to 5'-phosphomonoester.. Endonuclease that specifically degrades the RNA of RNA-DNA hybrids. The sequence is that of Ribonuclease HII from Haemophilus ducreyi (strain 35000HP / ATCC 700724).